Consider the following 176-residue polypeptide: NAD(P)H-quinone oxidoreductase subunit I, chloroplastic (176 aa).

2 consecutive 4Fe-4S ferredoxin-type domains span residues 55 to 84 and 95 to 124; these read GRIH…VDWE and LNYS…MTEE. [4Fe-4S] cluster contacts are provided by Cys64, Cys67, Cys70, Cys74, Cys104, Cys107, Cys110, and Cys114.

Belongs to the complex I 23 kDa subunit family. As to quaternary structure, NDH is composed of at least 16 different subunits, 5 of which are encoded in the nucleus. It depends on [4Fe-4S] cluster as a cofactor.

It localises to the plastid. The protein resides in the chloroplast thylakoid membrane. The enzyme catalyses a plastoquinone + NADH + (n+1) H(+)(in) = a plastoquinol + NAD(+) + n H(+)(out). It catalyses the reaction a plastoquinone + NADPH + (n+1) H(+)(in) = a plastoquinol + NADP(+) + n H(+)(out). NDH shuttles electrons from NAD(P)H:plastoquinone, via FMN and iron-sulfur (Fe-S) centers, to quinones in the photosynthetic chain and possibly in a chloroplast respiratory chain. The immediate electron acceptor for the enzyme in this species is believed to be plastoquinone. Couples the redox reaction to proton translocation, and thus conserves the redox energy in a proton gradient. The sequence is that of NAD(P)H-quinone oxidoreductase subunit I, chloroplastic from Populus trichocarpa (Western balsam poplar).